A 554-amino-acid chain; its full sequence is Outer envelope protein 61 (554 aa).

The Cytoplasmic segment spans residues 1 to 525 (MFNGLMDPEM…GMEKAKKAKK (525 aa)). 2 TPR repeats span residues 103–136 (AQML…LKEI) and 180–213 (VKAL…SPED). 2 disordered regions span residues 245–269 (TEEN…AQGV) and 395–439 (APAS…PSAP). Basic and acidic residues predominate over residues 254 to 263 (ENKKPSKEAN). A compositionally biased stretch (low complexity) spans 412–423 (SLGASGSSSGNS). A helical membrane pass occupies residues 526-546 (WLFGKGGLIFAILMLVLAMVL). Residues 547 to 554 (HRLGYIGN) are Lumenal-facing.

In terms of assembly, interacts (via TPR region) with HSP70-1, but not with HSP90-2. Interacts with ERDJ2A and ERDJ2B. In the ER membrane, associates with ERDJ2 in membrane complexes of 140 and 200 kDa and specifically interacts with the HSP70 and HSP90 chaperones via its TPR domain. As to expression, ubiquitous. Highest expression in leaves and lowest in roots.

Its subcellular location is the endoplasmic reticulum membrane. It is found in the plastid. The protein resides in the chloroplast outer membrane. Plays a role in protein import into the endoplasmic reticulum (ER). May function as chaperone docking protein during post-translational protein translocation into the ER. Chaperone receptor mediating Hsp70-dependent protein targeting to chloroplasts. Interacts specifically with some chloroplast precursors, but not with mitochondrial precursors. Able to select precursors for delivery to the chloroplast translocase independently of Hsp70. This Arabidopsis thaliana (Mouse-ear cress) protein is Outer envelope protein 61 (OEP61).